We begin with the raw amino-acid sequence, 387 residues long: Zinc finger protein neuro-d4 (387 aa).

Glycyl lysine isopeptide (Lys-Gly) (interchain with G-Cter in SUMO2) cross-links involve residues lysine 106, lysine 129, and lysine 133. The C2H2-type zinc finger occupies 195-218; that stretch reads YVCDICGKRYKNRPGLSYHYTHTH. PHD-type zinc fingers lie at residues 271 to 328 and 325 to 375; these read NGYC…CKSC and CKSC…CLRH. Residues cysteine 274, cysteine 277, cysteine 293, cysteine 296, histidine 301, cysteine 304, cysteine 322, cysteine 325, cysteine 328, cysteine 331, cysteine 343, cysteine 346, histidine 351, cysteine 354, cysteine 369, and cysteine 372 each coordinate Zn(2+).

The protein belongs to the requiem/DPF family. In terms of assembly, component of neuron-specific chromatin remodeling complex (nBAF complex) composed of at least, ARID1A/BAF250A or ARID1B/BAF250B, SMARCD1/BAF60A, SMARCD3/BAF60C, SMARCA2/BRM/BAF190B, SMARCA4/BRG1/BAF190A, SMARCB1/BAF47, SMARCC1/BAF155, SMARCE1/BAF57, SMARCC2/BAF170, DPF1/BAF45B, DPF3/BAF45C, ACTL6B/BAF53B and actin.

The protein resides in the cytoplasm. It is found in the nucleus. Its function is as follows. May have an important role in developing neurons by participating in regulation of cell survival, possibly as a neurospecific transcription factor. Belongs to the neuron-specific chromatin remodeling complex (nBAF complex). During neural development a switch from a stem/progenitor to a postmitotic chromatin remodeling mechanism occurs as neurons exit the cell cycle and become committed to their adult state. The transition from proliferating neural stem/progenitor cells to postmitotic neurons requires a switch in subunit composition of the npBAF and nBAF complexes. As neural progenitors exit mitosis and differentiate into neurons, npBAF complexes which contain ACTL6A/BAF53A and PHF10/BAF45A, are exchanged for homologous alternative ACTL6B/BAF53B and DPF1/BAF45B or DPF3/BAF45C subunits in neuron-specific complexes (nBAF). The npBAF complex is essential for the self-renewal/proliferative capacity of the multipotent neural stem cells. The nBAF complex along with CREST plays a role regulating the activity of genes essential for dendrite growth. The chain is Zinc finger protein neuro-d4 from Homo sapiens (Human).